The chain runs to 249 residues: Metal-staphylopine import system ATP-binding protein CntF (249 aa).

Residues 2–244 (IKVTDVEKSY…DNAYTRELIE (243 aa)) form the ABC transporter domain. 42-49 (GESGSGKS) contributes to the ATP binding site.

This sequence belongs to the ABC transporter superfamily. In terms of assembly, the complex is composed of two ATP-binding proteins (CntD and CntF), two transmembrane proteins (CntB and CntC) and a solute-binding protein (CntA).

The protein resides in the cell membrane. Part of the ABC transporter complex CntABCDF (Opp1) involved in the uptake of metal in complex with the metallophore staphylopine (StP). May be involved in the import of a large array of divalent metals ions such as nickel, cobalt, zinc, copper and iron. Probably responsible for energy coupling to the transport system. This chain is Metal-staphylopine import system ATP-binding protein CntF, found in Staphylococcus aureus (strain Mu50 / ATCC 700699).